Consider the following 173-residue polypeptide: Ribosomal RNA large subunit methyltransferase H (173 aa).

Leu89 and Gly121 together coordinate S-adenosyl-L-methionine.

Belongs to the RNA methyltransferase RlmH family. As to quaternary structure, homodimer.

Its subcellular location is the cytoplasm. The catalysed reaction is pseudouridine(1915) in 23S rRNA + S-adenosyl-L-methionine = N(3)-methylpseudouridine(1915) in 23S rRNA + S-adenosyl-L-homocysteine + H(+). Its function is as follows. Specifically methylates the pseudouridine at position 1915 (m3Psi1915) in 23S rRNA. The sequence is that of Ribosomal RNA large subunit methyltransferase H from Chelativorans sp. (strain BNC1).